An 889-amino-acid chain; its full sequence is Phosphatidylinositol 3-kinase VPS34 (889 aa).

Positions 34–184 constitute a C2 PI3K-type domain; it reads ASEKLIDPQL…EWIDELVLKK (151 aa). Residues 298 to 540 form the PIK helical domain; the sequence is SDKHVKPDAK…ESFLSRLNSN (243 aa). The PI3K/PI4K catalytic domain maps to 607–873; the sequence is MIDQCNVFKS…LINDSVNALL (267 aa). The G-loop stretch occupies residues 613–619; that stretch reads VFKSSLS. Residues 742–750 form a catalytic loop region; sequence GVGDRHLDN. The activation loop stretch occupies residues 761–782; it reads HADFGYILGQDPKPFPPLMKLP.

It belongs to the PI3/PI4-kinase family. Type III PI4K subfamily. As to quaternary structure, component of the autophagy-specific VPS34 PI3-kinase complex I composed of VPS15, VPS30, VPS34, ATG14 and ATG38; and of the VPS34 PI3-kinase complex II composed of VPS15, VPS30, VPS34 and VPS38. In terms of processing, autophosphorylated.

It is found in the golgi apparatus. It localises to the trans-Golgi network membrane. The protein resides in the endosome membrane. It catalyses the reaction a 1,2-diacyl-sn-glycero-3-phospho-(1D-myo-inositol) + ATP = a 1,2-diacyl-sn-glycero-3-phospho-(1D-myo-inositol-3-phosphate) + ADP + H(+). Multifunctional phosphatidylinositol 3-kinase that plays a role in signaling in modulation of host immune response, intracellular survival and virulence. Catalytic subunit of the autophagy-specific VPS34 PI3-kinase complex I essential to recruit the ATG8-phosphatidylinositol conjugate and the ATG12-ATG5 conjugate to the pre-autophagosomal structure. Also involved in endosome-to-Golgi retrograde transport as part of the VPS34 PI3-kinase complex II. This second complex is required for the endosome-to-Golgi retrieval of PEP1 and KEX2, and the recruitment of VPS5 and VPS7, two components of the retromer complex, to endosomal membranes (probably through the synthesis of a specific pool of phosphatidylinositol 3-phosphate recruiting the retromer to the endosomes). Finally, it might also be involved in ethanol tolerance and cell wall integrity. The sequence is that of Phosphatidylinositol 3-kinase VPS34 from Candida glabrata (strain ATCC 2001 / BCRC 20586 / JCM 3761 / NBRC 0622 / NRRL Y-65 / CBS 138) (Yeast).